Reading from the N-terminus, the 226-residue chain is Deoxyribose-phosphate aldolase (226 aa).

The active-site Proton donor/acceptor is aspartate 93. Lysine 159 acts as the Schiff-base intermediate with acetaldehyde in catalysis. Lysine 189 functions as the Proton donor/acceptor in the catalytic mechanism.

The protein belongs to the DeoC/FbaB aldolase family. DeoC type 1 subfamily.

It is found in the cytoplasm. The enzyme catalyses 2-deoxy-D-ribose 5-phosphate = D-glyceraldehyde 3-phosphate + acetaldehyde. The protein operates within carbohydrate degradation; 2-deoxy-D-ribose 1-phosphate degradation; D-glyceraldehyde 3-phosphate and acetaldehyde from 2-deoxy-alpha-D-ribose 1-phosphate: step 2/2. Catalyzes a reversible aldol reaction between acetaldehyde and D-glyceraldehyde 3-phosphate to generate 2-deoxy-D-ribose 5-phosphate. The polypeptide is Deoxyribose-phosphate aldolase (Mycobacterium marinum (strain ATCC BAA-535 / M)).